Reading from the N-terminus, the 61-residue chain is Small ribosomal subunit protein uS14 (61 aa).

Zn(2+) is bound by residues Cys-24, Cys-27, Cys-40, and Cys-43.

The protein belongs to the universal ribosomal protein uS14 family. Zinc-binding uS14 subfamily. Part of the 30S ribosomal subunit. Contacts proteins S3 and S10. Zn(2+) is required as a cofactor.

In terms of biological role, binds 16S rRNA, required for the assembly of 30S particles and may also be responsible for determining the conformation of the 16S rRNA at the A site. This is Small ribosomal subunit protein uS14 from Thermobifida fusca (strain YX).